Reading from the N-terminus, the 390-residue chain is Zinc transporter 7 (390 aa).

Topologically, residues 1–37 are cytoplasmic; that stretch reads MLPLSIKDDEYKPPKFNLVRKVSGWIRSIFSDTTSRN. A helical membrane pass occupies residues 38-58; the sequence is LFCFLCLNLSFAFVELFYGIW. Residues 59–67 lie on the Lumenal side of the membrane; that stretch reads SNSLGLISD. Residues 68 to 88 traverse the membrane as a helical segment; it reads SFHMFFDCTALLAGLAASVIS. Over 89-102 the chain is Cytoplasmic; the sequence is RWKTNEAFSYGYVR. The helical transmembrane segment at 103–123 threads the bilayer; sequence AEVLAGFVNGLFLIFTAFFIF. The Lumenal segment spans residues 124–140; sequence SEGIERALDTPEVHHER. The helical transmembrane segment at 141–161 threads the bilayer; sequence LLPVSILGFLVNLIGIFVFQH. Positions 161-226 are his-rich loop; sequence HGGGHGHSHE…SHDQSHKHGH (66 aa). Over 162–250 the chain is Cytoplasmic; it reads GGGHGHSHES…TGSSKQILEG (89 aa). The interval 167-243 is disordered; the sequence is HSHESGHGHS…DEPPEEHTGS (77 aa). The segment covering 177 to 186 has biased composition (low complexity); that stretch reads HSLFNGSLSH. The segment covering 187–208 has biased composition (basic residues); it reads GHSHSHGGSHGHSHGGGHGHSH. Basic and acidic residues-rich tracts occupy residues 209-222 and 232-242; these read SHGEGHGHSHDQSH and CHDEPPEEHTG. A helical membrane pass occupies residues 251–271; it reads VFLHIVADALGSVGVIISTIL. Topologically, residues 272–276 are lumenal; it reads MQRYG. Residues 277 to 297 traverse the membrane as a helical segment; it reads LMIADPICSMLIALLIFVSVI. At 298–390 the chain is on the cytoplasmic side; it reads PLLKQSIGIL…LYVQIDMAAM (93 aa).

Belongs to the cation diffusion facilitator (CDF) transporter (TC 2.A.4) family. SLC30A subfamily. Homooligomer.

It is found in the golgi apparatus membrane. The protein resides in the cytoplasmic vesicle. The protein localises to the golgi apparatus. It localises to the trans-Golgi network. Its subcellular location is the sarcoplasmic reticulum. It is found in the mitochondrion. The enzyme catalyses Zn(2+)(in) = Zn(2+)(out). Its function is as follows. Zinc ion transporter mediating zinc entry from the cytosol into the lumen of organelles along the secretory pathway. By contributing to zinc ion homeostasis within the early secretory pathway, regulates the activation and folding of enzymes like alkaline phosphatases. This chain is Zinc transporter 7 (slc30a7), found in Xenopus tropicalis (Western clawed frog).